The sequence spans 542 residues: Protein MGF 505-11L (542 aa).

The protein belongs to the asfivirus MGF 505 family.

Plays a role in virus cell tropism, and may be required for efficient virus replication in macrophages. The protein is Protein MGF 505-11L of African swine fever virus (isolate Pig/Kenya/KEN-50/1950) (ASFV).